The primary structure comprises 148 residues: Large-conductance mechanosensitive channel (148 aa).

2 helical membrane-spanning segments follow: residues 14–34 (VVDM…INTL) and 85–105 (GIFV…FLSV).

It belongs to the MscL family. Homopentamer.

Its subcellular location is the cell inner membrane. Channel that opens in response to stretch forces in the membrane lipid bilayer. May participate in the regulation of osmotic pressure changes within the cell. The chain is Large-conductance mechanosensitive channel from Chlorobium phaeobacteroides (strain DSM 266 / SMG 266 / 2430).